The chain runs to 340 residues: Protein-arginine kinase (340 aa).

A Phosphagen kinase C-terminal domain is found at 21 to 242 (VVLSSRIRLA…EQIIMQERVA (222 aa)). Residues 24-28 (SSRIR), His-79, Arg-113, 164-168 (RASVM), and 195-200 (RGIYGE) each bind ATP.

Belongs to the ATP:guanido phosphotransferase family.

The enzyme catalyses L-arginyl-[protein] + ATP = N(omega)-phospho-L-arginyl-[protein] + ADP + H(+). Functionally, catalyzes the specific phosphorylation of arginine residues in proteins. This Listeria innocua serovar 6a (strain ATCC BAA-680 / CLIP 11262) protein is Protein-arginine kinase.